The following is a 497-amino-acid chain: Glycerol kinase (497 aa).

Thr12 is an ADP binding site. ATP contacts are provided by Thr12, Thr13, and Ser14. Thr12 contributes to the sn-glycerol 3-phosphate binding site. Arg16 lines the ADP pocket. Residues Arg82, Glu83, Tyr134, and Asp243 each coordinate sn-glycerol 3-phosphate. Glycerol is bound by residues Arg82, Glu83, Tyr134, Asp243, and Gln244. Positions 265 and 308 each coordinate ADP. Thr265, Gly308, Gln312, and Gly409 together coordinate ATP. ADP is bound by residues Gly409 and Asn413.

Belongs to the FGGY kinase family.

It catalyses the reaction glycerol + ATP = sn-glycerol 3-phosphate + ADP + H(+). It participates in polyol metabolism; glycerol degradation via glycerol kinase pathway; sn-glycerol 3-phosphate from glycerol: step 1/1. With respect to regulation, inhibited by fructose 1,6-bisphosphate (FBP). Its function is as follows. Key enzyme in the regulation of glycerol uptake and metabolism. Catalyzes the phosphorylation of glycerol to yield sn-glycerol 3-phosphate. The sequence is that of Glycerol kinase from Solidesulfovibrio magneticus (strain ATCC 700980 / DSM 13731 / RS-1) (Desulfovibrio magneticus).